Consider the following 344-residue polypeptide: Phosphoribosylformylglycinamidine cyclo-ligase (344 aa).

This sequence belongs to the AIR synthase family.

It is found in the cytoplasm. It catalyses the reaction 2-formamido-N(1)-(5-O-phospho-beta-D-ribosyl)acetamidine + ATP = 5-amino-1-(5-phospho-beta-D-ribosyl)imidazole + ADP + phosphate + H(+). Its pathway is purine metabolism; IMP biosynthesis via de novo pathway; 5-amino-1-(5-phospho-D-ribosyl)imidazole from N(2)-formyl-N(1)-(5-phospho-D-ribosyl)glycinamide: step 2/2. This Haemophilus influenzae (strain 86-028NP) protein is Phosphoribosylformylglycinamidine cyclo-ligase.